We begin with the raw amino-acid sequence, 515 residues long: Acetyltransferase sphE (515 aa).

Catalysis depends on proton acceptor residues histidine 184 and aspartate 438.

This sequence belongs to the plant acyltransferase family. As to quaternary structure, monomer.

It catalyses the reaction sphingofungin B + acetyl-CoA = sphingofungin C + CoA. It functions in the pathway secondary metabolite biosynthesis. Acetyltransferase; part of the gene cluster that mediates the biosynthesis of sphingofungins, bioactive molecules acting as sphingolipid inhibitors via inhibiting serine palmitoyl transferase (SPT). Within the pathway, sphE catalyzes the O-acetylation of the C-5 hydroxyl group of sphingofungin B to produce sphingofungin C. SphE can also convert sphingofungin B1 into sphingofungin C1 and sphingofungin B2 into sphingofungin C2. Sphingofungin biosynthesis starts with the PKS sphB that produces an C18 polyketide precursor 3-hydroxyoctadeca-4,10-dienoyl-ACP containing one delta-6 desaturation and one delta-12 desaturation. The aminoacyl transferase sphA uses the sphB product to produce 3-keto-presphingofungin by adding an aminomalonate molecule. SphF then reduces the C-3 ketone of 3-keto-presphingofungin which leads to presphingofungin. The cytochrome P450 monooxygenase sphH converts presphingofungin into sphingofungin B1 which is further converted to sphingofungin B by the dioxygenase sphC. SphC is also able to convert presphingofungin into sphingofungin B2. The acetyltransferase sphE acetylates sphingofungin B to produce sphingofungin C, but can also convert sphingofungin B1 into sphingofungin C1 and sphingofungin B2 into sphingofungin C2. Finally, sphingofungin C can be spontaneously converted into sphingofungin D. This Aspergillus fumigatus (strain CBS 144.89 / FGSC A1163 / CEA10) (Neosartorya fumigata) protein is Acetyltransferase sphE.